Here is a 175-residue protein sequence, read N- to C-terminus: Putative lipoprotein LppN (175 aa).

A signal peptide spans 1–20 (MRLPGRHVLYALSAVTMLAA). C21 carries the N-palmitoyl cysteine lipid modification. C21 carries S-diacylglycerol cysteine lipidation. A disordered region spans residues 31–56 (ASTNMNPTNPPATAETATVSPTPAPQ). Positions 33–48 (TNMNPTNPPATAETAT) are enriched in low complexity. 3 prevents bacterial uptake by a human macrophage-like cell line regions span residues 61-80 (ETWI…PADL), 101-120 (RAPV…DCAA), and 121-140 (GFAP…VAYL).

The protein resides in the cell membrane. Its subcellular location is the cell surface. Probably involved in bacterial recognition and uptake by its host (human). The protein is Putative lipoprotein LppN (lppN) of Mycobacterium tuberculosis (strain ATCC 25618 / H37Rv).